The primary structure comprises 162 residues: uncharacterized protein (162 aa).

Helical transmembrane passes span 15 to 40 (TIYS…YFLL), 47 to 66 (ISML…TTAL), 76 to 98 (YSIL…FLVY), 105 to 124 (KWLG…DPLL), and 128 to 150 (GYAV…WLVI).

Its subcellular location is the cell membrane. This is an uncharacterized protein from Archaeoglobus fulgidus (strain ATCC 49558 / DSM 4304 / JCM 9628 / NBRC 100126 / VC-16).